The following is a 220-amino-acid chain: Cytidylate kinase (220 aa).

Residue 9 to 17 (GPAASGKST) participates in ATP binding.

Belongs to the cytidylate kinase family. Type 1 subfamily.

Its subcellular location is the cytoplasm. The catalysed reaction is CMP + ATP = CDP + ADP. It catalyses the reaction dCMP + ATP = dCDP + ADP. The protein is Cytidylate kinase of Thermotoga neapolitana (strain ATCC 49049 / DSM 4359 / NBRC 107923 / NS-E).